We begin with the raw amino-acid sequence, 107 residues long: U1-lycotoxin-Ls1a (107 aa).

The signal sequence occupies residues 1–20; sequence MMKVLVVVALLVTLISYSSS. The propeptide occupies 21–41; it reads EGIDDLEADELLSLMANEQTR. Intrachain disulfides connect C44-C59, C51-C68, C58-C86, and C70-C84.

It belongs to the neurotoxin 19 (CSTX) family. 04 (U1-Lctx) subfamily. In terms of tissue distribution, expressed by the venom gland.

Its subcellular location is the secreted. In Lycosa singoriensis (Wolf spider), this protein is U1-lycotoxin-Ls1a.